Here is a 250-residue protein sequence, read N- to C-terminus: Developmental protein SEPALLATA 2 (250 aa).

The region spanning 3–57 (RGRVELKRIENKINRQVTFAKRRNGLLKKAYELSVLCDAEVSLIVFSNRGKLYEF) is the MADS-box domain. The stretch at 85 to 150 (AKELENSYRE…CIKTQYMLDQ (66 aa)) forms a coiled coil. The 91-residue stretch at 88–178 (LENSYREYLK…SMKLEDMIGV (91 aa)) folds into the K-box domain.

As to quaternary structure, heterodimer with AGAMOUS capable of binding to CArG-box sequences. Interacts with TT16/AGL32.

It is found in the nucleus. Functionally, probable transcription factor. Functions with SEPALLATA1/AGL2 and SEPALLATA3/AGL9 to ensure proper development of petals, stamens and carpels and to prevent the indeterminate growth of the flower meristem. Forms a heterodimer via the K-box domain with AG, that could be involved in genes regulation during floral meristem development. The polypeptide is Developmental protein SEPALLATA 2 (SEP2) (Arabidopsis thaliana (Mouse-ear cress)).